We begin with the raw amino-acid sequence, 258 residues long: 5'-nucleotidase SurE (258 aa).

4 residues coordinate a divalent metal cation: D9, D10, S42, and N95.

This sequence belongs to the SurE nucleotidase family. A divalent metal cation serves as cofactor.

The protein localises to the cytoplasm. It catalyses the reaction a ribonucleoside 5'-phosphate + H2O = a ribonucleoside + phosphate. Nucleotidase that shows phosphatase activity on nucleoside 5'-monophosphates. The protein is 5'-nucleotidase SurE of Campylobacter concisus (strain 13826).